The chain runs to 94 residues: uncharacterized protein (94 aa).

Expressed in heart.

This is an uncharacterized protein from Homo sapiens (Human).